Consider the following 310-residue polypeptide: Zinc finger protein unc-98 (310 aa).

Polar residues predominate over residues 73 to 84 (GSSSAQTPTKSS). A disordered region spans residues 73–102 (GSSSAQTPTKSSGGALDGSDQQEVRQDGTS). 2 C2H2-type zinc fingers span residues 113–135 (YKCRFCGLTFNFMNTLRAHERIH) and 141–163 (YVCGKCGDSFEFACQLEYHAAQH). The C2H2-type 3; degenerate zinc finger occupies 169–188 (YKCECGRTFFSYTEMLYHKH). The interaction with myo-3 stretch occupies residues 198 to 310 (APETTTIKVS…RTSGYVTPRF (113 aa)). Residues 246–268 (YICEYCSKSYSDSRGLAYHMYSH) form a C2H2-type 4 zinc finger.

In terms of assembly, interacts with hum-6, mep-1, myo-3, unc-96 and unc-97/PINCH. As to expression, expressed in embryos from 1.5- to 2-fold stage in myofibrils. In larvae and adults, it is expressed in body wall muscle, and in addition, anal depressor muscle and vulval muscles. More specifically it is found in the thick filaments of muscle fibers.

The protein resides in the nucleus. It is found in the cytoplasm. Its function is as follows. Probable transcription factor required for muscle structure. Its dual subcellular localization suggests that it may function both as a muscle adhesion complex protein and as a transcription factor, or work together with transcription factors, to influence gene expression. Thought to act as a molecular bridge between unc-97 and myo-3 at the M-line of muscles, possibly in a signaling role. Plays a role in the formation of muscle connections, also called muscle arm extensions, between the body wall and the motor axons in the dorsal and ventral cord. In Caenorhabditis elegans, this protein is Zinc finger protein unc-98 (unc-98).